The primary structure comprises 216 residues: Pyridoxine/pyridoxamine 5'-phosphate oxidase (216 aa).

FMN contacts are provided by residues 64–69 (RVVLLK), 79–80 (FT), Lys-85, Lys-86, and Gln-108. Position 69 (Lys-69) interacts with substrate. Residues Tyr-126, Arg-130, and Ser-134 each coordinate substrate. Residues 143-144 (QS) and Trp-188 contribute to the FMN site. Substrate is bound at residue 194-196 (RKH). Residue Arg-198 participates in FMN binding.

Belongs to the pyridoxamine 5'-phosphate oxidase family. In terms of assembly, homodimer. Requires FMN as cofactor.

The catalysed reaction is pyridoxamine 5'-phosphate + O2 + H2O = pyridoxal 5'-phosphate + H2O2 + NH4(+). It catalyses the reaction pyridoxine 5'-phosphate + O2 = pyridoxal 5'-phosphate + H2O2. The protein operates within cofactor metabolism; pyridoxal 5'-phosphate salvage; pyridoxal 5'-phosphate from pyridoxamine 5'-phosphate: step 1/1. It functions in the pathway cofactor metabolism; pyridoxal 5'-phosphate salvage; pyridoxal 5'-phosphate from pyridoxine 5'-phosphate: step 1/1. Its function is as follows. Catalyzes the oxidation of either pyridoxine 5'-phosphate (PNP) or pyridoxamine 5'-phosphate (PMP) into pyridoxal 5'-phosphate (PLP). In Wolbachia pipientis wMel, this protein is Pyridoxine/pyridoxamine 5'-phosphate oxidase.